A 369-amino-acid chain; its full sequence is Aspartate beta-hydroxylase domain-containing protein 2 (369 aa).

Topologically, residues 1–58 (MVWAPLGPPRTDCLTLLHTPSKDSPKMSLEWLVAWSWSLDGLRDCIATGIQSVRDCDT) are cytoplasmic. Residues 59–79 (TAVITVACLLVLFVWYCYHVG) form a helical membrane-spanning segment. Residues 80–369 (REQPRPYVSV…ALDFIFAPGR (290 aa)) lie on the Lumenal side of the membrane. A glycan (N-linked (GlcNAc...) asparagine) is linked at Asn-211. Trp-228 and Ser-272 together coordinate 2-oxoglutarate. Residue His-283 participates in Fe cation binding. 292-294 (RCH) serves as a coordination point for 2-oxoglutarate. His-328 contacts Fe cation. Arg-341 serves as a coordination point for 2-oxoglutarate.

This sequence belongs to the aspartyl/asparaginyl beta-hydroxylase family. Fe cation is required as a cofactor.

It localises to the membrane. Functionally, may function as 2-oxoglutarate-dependent dioxygenase. The chain is Aspartate beta-hydroxylase domain-containing protein 2 (ASPHD2) from Homo sapiens (Human).